The chain runs to 454 residues: tRNA modification GTPase MnmE (454 aa).

3 residues coordinate (6S)-5-formyl-5,6,7,8-tetrahydrofolate: Arg23, Glu80, and Lys120. One can recognise a TrmE-type G domain in the interval 216-377; that stretch reads GMKVVIAGRP…LRNHLKQSMG (162 aa). Asn226 serves as a coordination point for K(+). Residues 226 to 231, 245 to 251, 270 to 273, and 335 to 338 contribute to the GTP site; these read NAGKSS, TDIAGTT, DTAG, and NKAD. A Mg(2+)-binding site is contributed by Ser230. K(+)-binding residues include Thr245, Ile247, and Thr250. Thr251 is a binding site for Mg(2+). Lys454 is a (6S)-5-formyl-5,6,7,8-tetrahydrofolate binding site.

It belongs to the TRAFAC class TrmE-Era-EngA-EngB-Septin-like GTPase superfamily. TrmE GTPase family. In terms of assembly, homodimer. Heterotetramer of two MnmE and two MnmG subunits. Requires K(+) as cofactor.

It is found in the cytoplasm. Functionally, exhibits a very high intrinsic GTPase hydrolysis rate. Involved in the addition of a carboxymethylaminomethyl (cmnm) group at the wobble position (U34) of certain tRNAs, forming tRNA-cmnm(5)s(2)U34. In Escherichia coli O157:H7, this protein is tRNA modification GTPase MnmE.